The primary structure comprises 417 residues: S-adenosylmethionine synthase (417 aa).

His16 provides a ligand contact to ATP. Residue Asp18 coordinates Mg(2+). A K(+)-binding site is contributed by Glu44. The L-methionine site is built by Glu57 and Gln100. The tract at residues 100–110 (QSPDIAQGVTS) is flexible loop. ATP contacts are provided by residues 175 to 177 (DGK), 251 to 252 (KF), Asp260, 266 to 267 (RK), Ala283, and Lys287. Asp260 lines the L-methionine pocket. Lys291 contacts L-methionine.

This sequence belongs to the AdoMet synthase family. Homotetramer; dimer of dimers. The cofactor is Mg(2+). K(+) serves as cofactor.

The protein resides in the cytoplasm. It carries out the reaction L-methionine + ATP + H2O = S-adenosyl-L-methionine + phosphate + diphosphate. The protein operates within amino-acid biosynthesis; S-adenosyl-L-methionine biosynthesis; S-adenosyl-L-methionine from L-methionine: step 1/1. Catalyzes the formation of S-adenosylmethionine (AdoMet) from methionine and ATP. The overall synthetic reaction is composed of two sequential steps, AdoMet formation and the subsequent tripolyphosphate hydrolysis which occurs prior to release of AdoMet from the enzyme. This is S-adenosylmethionine synthase from Picosynechococcus sp. (strain ATCC 27264 / PCC 7002 / PR-6) (Agmenellum quadruplicatum).